A 326-amino-acid polypeptide reads, in one-letter code: Aquaporin-3 (326 aa).

2 helical membrane-spanning segments follow: residues 24 to 44 and 64 to 84; these read LAEF…IITA and LAFG…GISG. The NPA 1 signature appears at 88–90; that stretch reads NPA. Residues 107–127 traverse the membrane as a helical segment; that stretch reads LVYIFMQYMGAFFAASILYAV. N-linked (GlcNAc...) asparagine glycosylation occurs at Asn146. 2 helical membrane passes run 166-186 and 196-216; these read IFDA…IIDP and IPLY…YNAG. An NPA 2 motif is present at residues 220–222; sequence NPA. Residues 247–267 traverse the membrane as a helical segment; it reads LWWLVPVIGPHVGGLLGGVTY. A glycan (N-linked (GlcNAc...) asparagine) is linked at Asn294.

The protein belongs to the MIP/aquaporin (TC 1.A.8) family.

Its subcellular location is the cell membrane. In terms of biological role, aquaglyceroporin that may modulate the water content and osmolytes during anhydrobiosis. In Milnesium tardigradum (Water bear), this protein is Aquaporin-3.